Consider the following 282-residue polypeptide: Shikimate dehydrogenase (NADP(+)) (282 aa).

Shikimate contacts are provided by residues Ser19–Ser21 and Thr66. Catalysis depends on Lys70, which acts as the Proton acceptor. Shikimate contacts are provided by Asn91 and Asp106. NADP(+) is bound by residues Gly130–Ala134, Asn152–Lys157, Thr196, Met200, and Leu224. Tyr226 provides a ligand contact to shikimate. Residue Gly247 participates in NADP(+) binding.

Belongs to the shikimate dehydrogenase family. As to quaternary structure, homodimer.

The catalysed reaction is shikimate + NADP(+) = 3-dehydroshikimate + NADPH + H(+). The protein operates within metabolic intermediate biosynthesis; chorismate biosynthesis; chorismate from D-erythrose 4-phosphate and phosphoenolpyruvate: step 4/7. In terms of biological role, involved in the biosynthesis of the chorismate, which leads to the biosynthesis of aromatic amino acids. Catalyzes the reversible NADPH linked reduction of 3-dehydroshikimate (DHSA) to yield shikimate (SA). The protein is Shikimate dehydrogenase (NADP(+)) of Methanocaldococcus jannaschii (strain ATCC 43067 / DSM 2661 / JAL-1 / JCM 10045 / NBRC 100440) (Methanococcus jannaschii).